We begin with the raw amino-acid sequence, 303 residues long: Elongation factor Ts (303 aa).

The tract at residues 82-85 (TDFV) is involved in Mg(2+) ion dislocation from EF-Tu.

It belongs to the EF-Ts family.

The protein localises to the cytoplasm. Functionally, associates with the EF-Tu.GDP complex and induces the exchange of GDP to GTP. It remains bound to the aminoacyl-tRNA.EF-Tu.GTP complex up to the GTP hydrolysis stage on the ribosome. In Clostridioides difficile (strain 630) (Peptoclostridium difficile), this protein is Elongation factor Ts.